Here is a 399-residue protein sequence, read N- to C-terminus: MKYIVLLGDGMSDEPMQELGGKTPLQAARTPHMDAMARRGRIGLARTVPEGYPPGSDVANLSVFGYDPRACYTGRSPLEAASMGVELGSADVAFRVNLVNLAPTRGTLVMNDYSAGHISTAEGRELIEAIQGVMGTDEFQFYPGVGYRHLMVWRNGKCGMTVVPPHDISGQSILEHLPKGEGAERLIELMNSSQLVLNNHPQYRRRLEEGKVPANSIWLWGHGKAPRMASFHEKFGLTGAVISAVDLVRGIGVCAGLDVIKVEGATGYIDTNYEGKVTAALEALEAHDYVYLHVEAPDEAGHGGNLEHKLKAIEDFDARVVGPIMAGMEKFGSYRILCTPDHPTPLRLKTHTDAPVPFVLFSGETSENAGVAGYDEESARSAGLVVEDGFRLMEMMLDR.

The protein belongs to the BPG-independent phosphoglycerate mutase family. A-PGAM subfamily.

It carries out the reaction (2R)-2-phosphoglycerate = (2R)-3-phosphoglycerate. The protein operates within carbohydrate degradation; glycolysis; pyruvate from D-glyceraldehyde 3-phosphate: step 3/5. Catalyzes the interconversion of 2-phosphoglycerate and 3-phosphoglycerate. The protein is Probable 2,3-bisphosphoglycerate-independent phosphoglycerate mutase of Geobacter sulfurreducens (strain ATCC 51573 / DSM 12127 / PCA).